The chain runs to 508 residues: ATP synthase subunit alpha, chloroplastic (508 aa).

An ATP-binding site is contributed by 170 to 177 (GDRQTGKT).

It belongs to the ATPase alpha/beta chains family. F-type ATPases have 2 components, F(1) - the catalytic core - and F(0) - the membrane proton channel. F(1) has five subunits: alpha(3), beta(3), gamma(1), delta(1), epsilon(1). F(0) has four main subunits: a(1), b(1), b'(1) and c(10-14). The alpha and beta chains form an alternating ring which encloses part of the gamma chain. F(1) is attached to F(0) by a central stalk formed by the gamma and epsilon chains, while a peripheral stalk is formed by the delta, b and b' chains.

The protein localises to the plastid. It is found in the chloroplast thylakoid membrane. The catalysed reaction is ATP + H2O + 4 H(+)(in) = ADP + phosphate + 5 H(+)(out). Its function is as follows. F(1)F(0) ATP synthase produces ATP from ADP in the presence of a proton or sodium gradient. F-type ATPases consist of two structural domains, F(1) containing the extramembraneous catalytic core and F(0) containing the membrane proton channel, linked together by a central stalk and a peripheral stalk. During catalysis, ATP synthesis in the catalytic domain of F(1) is coupled via a rotary mechanism of the central stalk subunits to proton translocation. The alpha chain is a regulatory subunit. This Chlamydomonas reinhardtii (Chlamydomonas smithii) protein is ATP synthase subunit alpha, chloroplastic.